The sequence spans 215 residues: Ribonuclease HII (215 aa).

The RNase H type-2 domain maps to Gly-24–Asp-215. A divalent metal cation is bound by residues Asp-30, Glu-31, and Asp-125.

The protein belongs to the RNase HII family. Requires Mn(2+) as cofactor. Mg(2+) serves as cofactor.

Its subcellular location is the cytoplasm. The catalysed reaction is Endonucleolytic cleavage to 5'-phosphomonoester.. In terms of biological role, endonuclease that specifically degrades the RNA of RNA-DNA hybrids. The protein is Ribonuclease HII of Zymomonas mobilis subsp. mobilis (strain ATCC 31821 / ZM4 / CP4).